We begin with the raw amino-acid sequence, 574 residues long: Septation ring formation regulator EzrA (574 aa).

The Extracellular portion of the chain corresponds to 1–7; that stretch reads MSSGIIL. A helical membrane pass occupies residues 8 to 26; it reads LIVAIVLLVIIAYLVGVII. The Cytoplasmic portion of the chain corresponds to 27-574; it reads RKRNDSLITS…YEKTREHIRF (548 aa). Coiled-coil stretches lie at residues 102–141, 274–350, and 459–520; these read NFIRAKHEINSVESQLNLVEEDIASIREALNILKEQEEKN, ELVT…ETES, and QLEA…SFEA.

It belongs to the EzrA family.

It localises to the cell membrane. Its function is as follows. Negative regulator of FtsZ ring formation; modulates the frequency and position of FtsZ ring formation. Inhibits FtsZ ring formation at polar sites. Interacts either with FtsZ or with one of its binding partners to promote depolymerization. This is Septation ring formation regulator EzrA from Streptococcus pyogenes serotype M4 (strain MGAS10750).